Here is a 275-residue protein sequence, read N- to C-terminus: MKGLTRLLNSLSRHTASVTCSPSSSSLLISRRSLFISAATHFPVNFSESITTNASRNCSRSSSFPFNWIEQRRTMFIQTQSTPNPSSLMFSPGKPVMEIGSADFPNSRSAMSSPLAKAIFAIDGVVRVFYGSDFVTVTKSDDVTWDILKPDIFAVVMDFYSSGQPLFLDSQATAAKDTAIHEDDSETVAMIKELLETRIRPSVQDDGGDIEYCGFDTETGIVKLRMQGACSGCPSSSVTLKSGIENMLMHYVSEVKGVEQEFDGEEEGTSSGPME.

The N-terminal 61 residues, 1–61 (MKGLTRLLNS…TNASRNCSRS (61 aa)), are a transit peptide targeting the mitochondrion.

Belongs to the NifU family.

The protein resides in the mitochondrion. Its function is as follows. Molecular scaffold for [Fe-S] cluster assembly of mitochondrial iron-sulfur proteins. The chain is NifU-like protein 5, mitochondrial (NIFU5) from Arabidopsis thaliana (Mouse-ear cress).